The following is a 397-amino-acid chain: Monooxygenase 1 (397 aa).

This sequence belongs to the 3-hydroxybenzoate 6-hydroxylase family. As to quaternary structure, monomer. FAD serves as cofactor. As to expression, expressed in seedlings, roots, leaves, flowers and siliques.

The chain is Monooxygenase 1 from Arabidopsis thaliana (Mouse-ear cress).